The chain runs to 452 residues: MDRRIFGLENEYGVTCTFHGQRRLSPDEVARYLFRRVVSWGRSSNVFLRNGARLYLDVGSHPEYATPECDNLVDLVVHDKAGERTLEGLLVDAEHRLREEGITGDIYLFKNNTDSAGNSYGCHENYLVTRQGEFSRLADVLIPFLVTRQLICGAGKVLATPRGAVYCLSQRAEHIWEGVSSATTRSRPIINTRDEPHADAERFRRLHVIVGDSNMAEPSTLLKVGSTDIVLRMIEAGVVLRDLSLENPIRAIREVSHDPTGRRRIRMANGREASALEIQEEYLSKAQEFLERRGTDAVTKRVLDLWERTLRAVRTGDLSLVDREIDWVIKYRLIEAYRARHDLPLSSPRVAQIDLAYHDVKRTRGLYYLLERKGAVERVAHDVQIFEAKSTPPQTTRARLRGEFIRHAQEKRRDFTVDWVHLKLNDQAQRTVLCKDPFRSVDERVEKLIASM.

E9 lines the Mg(2+) pocket. R53 contacts ATP. A Mg(2+)-binding site is contributed by Y55. The active-site Proton acceptor is the D57. Mg(2+) is bound at residue E63. Residues T66 and W419 each contribute to the ATP site.

This sequence belongs to the Pup ligase/Pup deamidase family. Pup-conjugating enzyme subfamily.

The enzyme catalyses ATP + [prokaryotic ubiquitin-like protein]-L-glutamate + [protein]-L-lysine = ADP + phosphate + N(6)-([prokaryotic ubiquitin-like protein]-gamma-L-glutamyl)-[protein]-L-lysine.. The protein operates within protein degradation; proteasomal Pup-dependent pathway. It participates in protein modification; protein pupylation. Catalyzes the covalent attachment of the prokaryotic ubiquitin-like protein modifier Pup to the proteasomal substrate proteins, thereby targeting them for proteasomal degradation. This tagging system is termed pupylation. The ligation reaction involves the side-chain carboxylate of the C-terminal glutamate of Pup and the side-chain amino group of a substrate lysine. The protein is Pup--protein ligase of Acidothermus cellulolyticus (strain ATCC 43068 / DSM 8971 / 11B).